The following is a 387-amino-acid chain: MSARLKGGLFVRYKQMERKLRLLEIREGYVRKEIETLKREERHSREELDRVKSVPLIMGQFLEPIDSSTAIVGSTAGSNFVVRILSTVDRELLKPNTTVALHRHSSAIVGVLPPEVDSTIPVMGESEKPSVTYGDVGGLDVQKQEIKETVELPLLQSDLYRQIGIDPPQGVLLYGPPGTGKTMLVKAVANHTKATFIRVNGSEFVQKYLGEGPRMVRDVFRLAREKAPSIVFIDEVDSIATKRFDASTSADREVQRVLIELLNQMDGFDPAANVKVIMATNRADTIDPALLRPGRLDRKIEFPLPDRRQKRLVFNAITSKMSLNDSVDIESLVCRPEKISCADINSICQEAGMLAVRASRYMVTQRDFEEAYSKVVERSGTQPAFYN.

175 to 182 (GPPGTGKT) contributes to the ATP binding site.

This sequence belongs to the AAA ATPase family. In terms of assembly, the 26S proteasome consists of a 20S proteasome core and two 19S regulatory subunits. The 20S proteasome core is composed of 28 subunits that are arranged in four stacked rings, resulting in a barrel-shaped structure. The two end rings are each formed by seven alpha subunits, and the two central rings are each formed by seven beta subunits. The catalytic chamber with the active sites is on the inside of the barrel.

Its subcellular location is the cytoplasm. The protein resides in the nucleus. Acts as a regulatory subunit of the 26S proteasome which degrades poly-ubiquitinated proteins in the cytoplasm and in the nucleus. It is essential for the regulated turnover of proteins and for the removal of misfolded proteins. The proteasome is a multicatalytic proteinase complex that is characterized by its ability to cleave peptides with Arg, Phe, Tyr, Leu, and Glu adjacent to the leaving group at neutral or slightly basic pH. In Encephalitozoon cuniculi (strain GB-M1) (Microsporidian parasite), this protein is 26S proteasome regulatory subunit 6B homolog.